The primary structure comprises 1217 residues: MSLIYFASGDSHANIEYQTISSTATEANQEQSERLHDRISKAQLQRLYERFKSAPDQVVGCADFRRMLEEVDIVFSDFTYTRLFLKINQNHDFLVDWNEFVSYLIFGFQEEDPSSQKESLIMPISAAPVVRKTEHRSAVCCITLLKVKSDQTPLEDMTESANYSFGGEDSPENSGMWVTASHEGQLRFWSAHMEPLRSAVSESIYCMSYAFYNNGKTHSKLVLGDYAGNVRILSYSPYLRGPFQAKPGAALVELTWADVLRGRIPLLIPKEYINLHNELISCVYYSLHMNALFASAEYRNTKKYRGRCPGLIMVSNDDRNNFRIPLGVSVFYVSEVKNILVTGGPDTFVRIWDVYISSEPSAILTGHNGGIVAVFVQPEENKVYSVDYHKIIKVWDLQEHTLLQTYGELVRIIHHSEMDIKYYYHSHLRELMVAGRKLIQVKCCPRVRVDLTDGNTHAAPVSVVLYNRLFRNIVTCGLDSYIIVWDPWTGRRKIIMKNCHTKMIYGETIDIEITAACFDPLEQFLLTGARDGSLKIWNYNNSVVVRNMSIQMDQEVTAVIWVVDRILAMGWDRQVTEFNDVEGREYGDPKKWAKFHTDDITCADVKLGEGVVTATYSGEIIFWKLETGQPYRRYNVMDPSQFIELKLTAEEEKLSRRSKRISSLLGANRRSASMLAIKPDEIKDYGANIPVSVQAVLFLQKRPMTKDHGSVFISLDTGIIQVYSHHQHGGHIKEFIAVHKVGDCVLTMATDRKNRFLYTGTAFGYIKIWHIVNYCIPEAEKTHVCMPKLRLDFIFLRKELFLTRAKRMVRNQPEPMLVSSYKGHLKAINSIGFINLPKILFSGSHDYSCRLWTQSGRYLGTLGTVLPWSKLSPFERAGEENRPYRLPPDIKKVASSTTLKVISGVQHSFQVKRPKPTEEREDEGEVEDTGTEMKNIFDRPLREPILGKHFELPGRSAIEQRIELDTTQLYVPIYSHLRVHPSDVMENLPTPPIIGQVKSENYLDHYMPVVGKVDPNTSAINIREPNKVIRSKAGGQVGQARASSTWGKPKTNSILGMPRAESSQGKARASSAKAGVSSGYGRTNFGPNPSRVRSNSPKVSFMPSQLKTCRKPESSPRKAKTSPARAKSVSFPAKANPVSTSAKANPTCTSVKTNPVPTSAKASRVSTSAKSNPVSTSANAKPDIMPVKIKPVVKKPSRNTAPVQITTSIAKTKKDKP.

WD repeat units follow at residues 155 to 199 (EDMT…LRSA), 323 to 362 (RIPL…EPSA), 366 to 405 (GHNG…LLQT), 456 to 495 (THAA…RKII), 508 to 547 (TIDI…VVRN), 595 to 635 (FHTD…RRYN), 740 to 779 (KVGD…IPEA), and 823 to 862 (GHLK…LGTL). Disordered regions lie at residues 910–929 (QVKR…VEDT) and 1033–1217 (AGGQ…KDKP). Over residues 919–929 (EREDEGEVEDT) the composition is skewed to acidic residues. 3 stretches are compositionally biased toward polar residues: residues 1041–1054 (RASS…TNSI), 1085–1107 (FGPN…SQLK), and 1137–1179 (PVST…TSAN). Residues 1181–1190 (KPDIMPVKIK) show a composition bias toward low complexity. The span at 1198-1210 (RNTAPVQITTSIA) shows a compositional bias: polar residues.

This chain is WD repeat-containing protein on Y chromosome, found in Drosophila mojavensis (Fruit fly).